The sequence spans 419 residues: GTPase Obg (419 aa).

Residues 1-156 (MFIDKVNTYL…AEVNLELRLI (156 aa)) enclose the Obg domain. An OBG-type G domain is found at 157-325 (ADVGLLGLPN…LLKEMLRMLE (169 aa)). Residues 163 to 170 (GLPNAGKS), 188 to 192 (FTTLA), 209 to 212 (DIPG), 279 to 282 (NKID), and 306 to 308 (SAA) each bind GTP. The Mg(2+) site is built by S170 and T190. Residues 342–419 (KKYIYEPEFK…IGDFEFTFEK (78 aa)) enclose the OCT domain.

It belongs to the TRAFAC class OBG-HflX-like GTPase superfamily. OBG GTPase family. Monomer. Requires Mg(2+) as cofactor.

Its subcellular location is the cytoplasm. Functionally, an essential GTPase which binds GTP, GDP and possibly (p)ppGpp with moderate affinity, with high nucleotide exchange rates and a fairly low GTP hydrolysis rate. Plays a role in control of the cell cycle, stress response, ribosome biogenesis and in those bacteria that undergo differentiation, in morphogenesis control. This is GTPase Obg from Endomicrobium trichonymphae.